Reading from the N-terminus, the 602-residue chain is Sensor histidine kinase AtsR (602 aa).

Helical transmembrane passes span 11–31 and 182–202; these read IIVA…FLLF and AIVM…LLLF. The region spanning 242-461 is the Histidine kinase domain; the sequence is MVSHELRTPL…EFVVTLPVEL (220 aa). A Phosphohistidine; by autocatalysis modification is found at H245. The Response regulatory domain maps to 484-601; it reads HALVVDDNEN…TLNGIVSRLR (118 aa). The residue at position 533 (D533) is a 4-aspartylphosphate.

The protein resides in the cell inner membrane. It catalyses the reaction ATP + protein L-histidine = ADP + protein N-phospho-L-histidine.. Member of a two-component regulatory system involved in control of gene expression; inhibits synthesis of (at least) the polyketide antibiotic thailandamide. Its two-component partner may be BTH_I0635. The sequence is that of Sensor histidine kinase AtsR from Burkholderia thailandensis (strain ATCC 700388 / DSM 13276 / CCUG 48851 / CIP 106301 / E264).